Here is a 317-residue protein sequence, read N- to C-terminus: Beta-ketoacyl-[acyl-carrier-protein] synthase III (317 aa).

Residues C112 and H244 contribute to the active site. The tract at residues Q245 to R249 is ACP-binding. N274 is a catalytic residue.

It belongs to the thiolase-like superfamily. FabH family. As to quaternary structure, homodimer.

The protein localises to the cytoplasm. It carries out the reaction malonyl-[ACP] + acetyl-CoA + H(+) = 3-oxobutanoyl-[ACP] + CO2 + CoA. It functions in the pathway lipid metabolism; fatty acid biosynthesis. In terms of biological role, catalyzes the condensation reaction of fatty acid synthesis by the addition to an acyl acceptor of two carbons from malonyl-ACP. Catalyzes the first condensation reaction which initiates fatty acid synthesis and may therefore play a role in governing the total rate of fatty acid production. Possesses both acetoacetyl-ACP synthase and acetyl transacylase activities. Its substrate specificity determines the biosynthesis of branched-chain and/or straight-chain of fatty acids. The chain is Beta-ketoacyl-[acyl-carrier-protein] synthase III from Aliivibrio fischeri (strain ATCC 700601 / ES114) (Vibrio fischeri).